We begin with the raw amino-acid sequence, 201 residues long: Glutathione peroxidase 1 (201 aa).

Ser-7 and Ser-32 each carry phosphoserine. Sec-47 is an active-site residue. Sec-47 is a non-standard amino acid (selenocysteine). Residues Lys-62, Lys-86, and Lys-112 each carry the N6-acetyllysine; alternate modification. N6-succinyllysine; alternate is present on residues Lys-62, Lys-86, and Lys-112. Lys-119 carries the N6-acetyllysine modification. Lys-146 is modified (N6-acetyllysine; alternate). Residue Lys-146 is modified to N6-succinyllysine; alternate. Ser-195 bears the Phosphoserine mark.

It belongs to the glutathione peroxidase family. Homotetramer. Interacts with MIEN1. During periods of oxidative stress, Sec-47 may react with a superoxide radical, irreversibly lose hydroselenide and be converted to dehydroalanine. Expressed in liver, kidney, lung, brain and heart.

The protein resides in the cytoplasm. Its subcellular location is the mitochondrion. The enzyme catalyses 2 glutathione + H2O2 = glutathione disulfide + 2 H2O. It catalyses the reaction a hydroperoxy polyunsaturated fatty acid + 2 glutathione = a hydroxy polyunsaturated fatty acid + glutathione disulfide + H2O. It carries out the reaction tert-butyl hydroperoxide + 2 glutathione = tert-butanol + glutathione disulfide + H2O. The catalysed reaction is cumene hydroperoxide + 2 glutathione = 2-phenylpropan-2-ol + glutathione disulfide + H2O. The enzyme catalyses (13S)-hydroperoxy-(9Z,11E)-octadecadienoate + 2 glutathione = (13S)-hydroxy-(9Z,11E)-octadecadienoate + glutathione disulfide + H2O. It catalyses the reaction (9S)-hydroperoxy-(10E,12Z)-octadecadienoate + 2 glutathione = (9S)-hydroxy-(10E,12Z)-octadecadienoate + glutathione disulfide + H2O. It carries out the reaction (5S)-hydroperoxy-(6E,8Z,11Z,14Z)-eicosatetraenoate + 2 glutathione = (5S)-hydroxy-(6E,8Z,11Z,14Z)-eicosatetraenoate + glutathione disulfide + H2O. The catalysed reaction is (12S)-hydroperoxy-(5Z,8Z,10E,14Z)-eicosatetraenoate + 2 glutathione = (12S)-hydroxy-(5Z,8Z,10E,14Z)-eicosatetraenoate + glutathione disulfide + H2O. The enzyme catalyses (12R)-hydroperoxy-(5Z,8Z,10E,14Z)-eicosatetraenoate + 2 glutathione = (12R)-hydroxy-(5Z,8Z,10E,14Z)-eicosatetraenoate + glutathione disulfide + H2O. It catalyses the reaction (15S)-hydroperoxy-(5Z,8Z,11Z,13E)-eicosatetraenoate + 2 glutathione = (15S)-hydroxy-(5Z,8Z,11Z,13E)-eicosatetraenoate + glutathione disulfide + H2O. It carries out the reaction (5S)-hydroperoxy-(6E,8Z,11Z,14Z,17Z)-eicosapentaenoate + 2 glutathione = (5S)-hydroxy-(6E,8Z,11Z,14Z,17Z)-eicosapentaenoate + glutathione disulfide + H2O. The catalysed reaction is (12S)-hydroperoxy-(5Z,8Z,10E,14Z,17Z)-eicosapentaenoate + 2 glutathione = (12S)-hydroxy-(5Z,8Z,10E,14Z,17Z)-eicosapentaenoate + glutathione disulfide + H2O. The enzyme catalyses (15S)-hydroperoxy-(5Z,8Z,11Z,13E,17Z)-eicosapentaenoate + 2 glutathione = (15S)-hydroxy-(5Z,8Z,11Z,13E,17Z)-eicosapentaenoate + glutathione disulfide + H2O. It catalyses the reaction (15S)-hydroperoxy-(11Z,13E)-eicosadienoate + 2 glutathione = (15S)-hydroxy-(11Z,13E)-eicosadienoate + glutathione disulfide + H2O. It carries out the reaction (17S)-hydroperoxy-(4Z,7Z,10Z,13Z,15E,19Z)-docosahexaenoate + 2 glutathione = (17S)-hydroxy-(4Z,7Z,10Z,13Z,15E,19Z)-docosahexaenoate + glutathione disulfide + H2O. Catalyzes the reduction of hydroperoxides in a glutathione-dependent manner thus regulating cellular redox homeostasis. Can reduce small soluble hydroperoxides such as H2O2, cumene hydroperoxide and tert-butyl hydroperoxide, as well as several fatty acid-derived hydroperoxides. In platelets catalyzes the reduction of 12-hydroperoxyeicosatetraenoic acid, the primary product of the arachidonate 12-lipoxygenase pathway. The sequence is that of Glutathione peroxidase 1 from Mus musculus (Mouse).